A 155-amino-acid chain; its full sequence is Deoxyuridine 5'-triphosphate nucleotidohydrolase (155 aa).

Substrate contacts are provided by residues 74 to 76 (RSG), N87, and 91 to 93 (LID).

It belongs to the dUTPase family. Requires Mg(2+) as cofactor.

The catalysed reaction is dUTP + H2O = dUMP + diphosphate + H(+). Its pathway is pyrimidine metabolism; dUMP biosynthesis; dUMP from dCTP (dUTP route): step 2/2. Its function is as follows. This enzyme is involved in nucleotide metabolism: it produces dUMP, the immediate precursor of thymidine nucleotides and it decreases the intracellular concentration of dUTP so that uracil cannot be incorporated into DNA. The sequence is that of Deoxyuridine 5'-triphosphate nucleotidohydrolase from Xanthomonas oryzae pv. oryzae (strain PXO99A).